A 217-amino-acid chain; its full sequence is uncharacterized protein (217 aa).

4 consecutive transmembrane segments (helical) span residues 9–29 (ISLA…LSTI), 54–74 (FLST…LLEL), 103–125 (LMAY…RFLS), and 135–157 (IVFW…ASYI).

It belongs to the DP1 family.

The protein localises to the endoplasmic reticulum membrane. This is an uncharacterized protein from Schizosaccharomyces pombe (strain 972 / ATCC 24843) (Fission yeast).